The chain runs to 288 residues: Killer cell lectin-like receptor 2 (288 aa).

Topologically, residues 1 to 45 are cytoplasmic; it reads MSEQEVTYTTLRFHKSSGLQNPVRPEETQRPRDVGHRECSVPWKF. The helical; Signal-anchor for type II membrane protein transmembrane segment at 46–66 threads the bilayer; that stretch reads IVIVLGILCFLLLLTVAVLVI. The Extracellular segment spans residues 67–288; the sequence is HIFRDGQEKH…SALQRDEDES (222 aa). N-linked (GlcNAc...) asparagine glycans are attached at residues Asn-94, Asn-105, and Asn-114. Positions 144–263 constitute a C-type lectin domain; it reads QVEGYWFCCG…THGCICEKRL (120 aa). Disulfide bonds link Cys-151/Cys-156, Cys-169/Cys-257, Cys-173/Cys-259, and Cys-238/Cys-251. The N-linked (GlcNAc...) asparagine glycan is linked to Asn-177.

As to quaternary structure, homodimer; disulfide-linked.

The protein resides in the membrane. Its function is as follows. Receptor on natural killer (NK) cells for class I MHC. In Mus musculus (Mouse), this protein is Killer cell lectin-like receptor 2 (Klra2).